Consider the following 119-residue polypeptide: Large ribosomal subunit protein uL22 (119 aa).

It belongs to the universal ribosomal protein uL22 family. As to quaternary structure, part of the 50S ribosomal subunit.

Functionally, this protein binds specifically to 23S rRNA; its binding is stimulated by other ribosomal proteins, e.g. L4, L17, and L20. It is important during the early stages of 50S assembly. It makes multiple contacts with different domains of the 23S rRNA in the assembled 50S subunit and ribosome. Its function is as follows. The globular domain of the protein is located near the polypeptide exit tunnel on the outside of the subunit, while an extended beta-hairpin is found that lines the wall of the exit tunnel in the center of the 70S ribosome. In Rickettsia typhi (strain ATCC VR-144 / Wilmington), this protein is Large ribosomal subunit protein uL22.